Consider the following 282-residue polypeptide: tRNA pseudouridine synthase A (282 aa).

Residue aspartate 51 is the Nucleophile of the active site. Tyrosine 109 lines the substrate pocket.

This sequence belongs to the tRNA pseudouridine synthase TruA family. In terms of assembly, homodimer.

It catalyses the reaction uridine(38/39/40) in tRNA = pseudouridine(38/39/40) in tRNA. Functionally, formation of pseudouridine at positions 38, 39 and 40 in the anticodon stem and loop of transfer RNAs. This chain is tRNA pseudouridine synthase A, found in Delftia acidovorans (strain DSM 14801 / SPH-1).